The chain runs to 728 residues: Catalase-peroxidase (728 aa).

Positions 97-225 (WHSAGTYRIA…LAAVMMGLIY (129 aa)) form a cross-link, tryptophyl-tyrosyl-methioninium (Trp-Tyr) (with M-251). His98 (proton acceptor) is an active-site residue. Residues 225 to 251 (YVNPEGVDGNPDPLRTAQDIRITFARM) constitute a cross-link (tryptophyl-tyrosyl-methioninium (Tyr-Met) (with W-97)). A heme b-binding site is contributed by His266.

Belongs to the peroxidase family. Peroxidase/catalase subfamily. As to quaternary structure, homodimer or homotetramer. Requires heme b as cofactor. Post-translationally, formation of the three residue Trp-Tyr-Met cross-link is important for the catalase, but not the peroxidase activity of the enzyme.

The catalysed reaction is H2O2 + AH2 = A + 2 H2O. It carries out the reaction 2 H2O2 = O2 + 2 H2O. Functionally, bifunctional enzyme with both catalase and broad-spectrum peroxidase activity. The chain is Catalase-peroxidase from Shewanella putrefaciens (strain CN-32 / ATCC BAA-453).